The primary structure comprises 416 residues: Serine hydroxymethyltransferase (416 aa).

Residues leucine 121 and 125–127 (GHL) each bind (6S)-5,6,7,8-tetrahydrofolate. Lysine 229 is subject to N6-(pyridoxal phosphate)lysine.

This sequence belongs to the SHMT family. In terms of assembly, homodimer. It depends on pyridoxal 5'-phosphate as a cofactor.

It is found in the cytoplasm. The catalysed reaction is (6R)-5,10-methylene-5,6,7,8-tetrahydrofolate + glycine + H2O = (6S)-5,6,7,8-tetrahydrofolate + L-serine. It functions in the pathway one-carbon metabolism; tetrahydrofolate interconversion. Its pathway is amino-acid biosynthesis; glycine biosynthesis; glycine from L-serine: step 1/1. In terms of biological role, catalyzes the reversible interconversion of serine and glycine with tetrahydrofolate (THF) serving as the one-carbon carrier. This reaction serves as the major source of one-carbon groups required for the biosynthesis of purines, thymidylate, methionine, and other important biomolecules. Also exhibits THF-independent aldolase activity toward beta-hydroxyamino acids, producing glycine and aldehydes, via a retro-aldol mechanism. In Neisseria gonorrhoeae (strain ATCC 700825 / FA 1090), this protein is Serine hydroxymethyltransferase.